The chain runs to 287 residues: Ribosomal RNA small subunit methyltransferase A (287 aa).

Positions 1 to 15 are enriched in polar residues; the sequence is MSKTTFDAQSITNSL. Residues 1–20 form a disordered region; it reads MSKTTFDAQSITNSLRAAKH. The S-adenosyl-L-methionine site is built by Asn29, Leu31, Gly56, Glu77, and Asn126.

It belongs to the class I-like SAM-binding methyltransferase superfamily. rRNA adenine N(6)-methyltransferase family. RsmA subfamily.

The protein localises to the cytoplasm. The catalysed reaction is adenosine(1518)/adenosine(1519) in 16S rRNA + 4 S-adenosyl-L-methionine = N(6)-dimethyladenosine(1518)/N(6)-dimethyladenosine(1519) in 16S rRNA + 4 S-adenosyl-L-homocysteine + 4 H(+). In terms of biological role, specifically dimethylates two adjacent adenosines (A1518 and A1519) in the loop of a conserved hairpin near the 3'-end of 16S rRNA in the 30S particle. May play a critical role in biogenesis of 30S subunits. This is Ribosomal RNA small subunit methyltransferase A from Psychrobacter cryohalolentis (strain ATCC BAA-1226 / DSM 17306 / VKM B-2378 / K5).